The primary structure comprises 249 residues: Electron transfer flavoprotein subunit beta (249 aa).

Belongs to the ETF beta-subunit/FixA family. Heterodimer of an alpha and a beta subunit. The cofactor is FAD. It depends on AMP as a cofactor.

In terms of biological role, the electron transfer flavoprotein serves as a specific electron acceptor for other dehydrogenases. It transfers the electrons to the main respiratory chain via ETF-ubiquinone oxidoreductase (ETF dehydrogenase). The sequence is that of Electron transfer flavoprotein subunit beta (etfB) from Bradyrhizobium diazoefficiens (strain JCM 10833 / BCRC 13528 / IAM 13628 / NBRC 14792 / USDA 110).